An 84-amino-acid chain; its full sequence is Antimicrobial peptide MeuNaTxbeta-2 (84 aa).

A signal peptide spans 1–20; that stretch reads MMKTVIVLIVFSLVMIVVKS. The region spanning 21–83 is the LCN-type CS-alpha/beta domain; it reads DNGYLLDKYT…LWHYETNRCR (63 aa). Cystine bridges form between Cys-32–Cys-82, Cys-36–Cys-57, Cys-43–Cys-64, and Cys-47–Cys-66.

Expressed by the venom gland.

It is found in the secreted. In terms of biological role, antimicrobial peptide with activity against both Gram-positive and -negative bacteria. The polypeptide is Antimicrobial peptide MeuNaTxbeta-2 (Mesobuthus eupeus (Lesser Asian scorpion)).